We begin with the raw amino-acid sequence, 203 residues long: Glycerol-3-phosphate acyltransferase (203 aa).

Helical transmembrane passes span leucine 6–valine 26, alanine 82–phenylalanine 102, alanine 118–isoleucine 138, and tyrosine 141–aspartate 161.

Belongs to the PlsY family. Probably interacts with PlsX.

It is found in the cell inner membrane. The catalysed reaction is an acyl phosphate + sn-glycerol 3-phosphate = a 1-acyl-sn-glycero-3-phosphate + phosphate. The protein operates within lipid metabolism; phospholipid metabolism. Catalyzes the transfer of an acyl group from acyl-phosphate (acyl-PO(4)) to glycerol-3-phosphate (G3P) to form lysophosphatidic acid (LPA). This enzyme utilizes acyl-phosphate as fatty acyl donor, but not acyl-CoA or acyl-ACP. This chain is Glycerol-3-phosphate acyltransferase, found in Shewanella putrefaciens (strain CN-32 / ATCC BAA-453).